The primary structure comprises 320 residues: ATP-dependent 6-phosphofructokinase (320 aa).

Residue Gly12 participates in ATP binding. Residue 22 to 26 (RAVVR) participates in ADP binding. ATP contacts are provided by residues 73–74 (RF) and 103–106 (GDGS). Residue Asp104 participates in Mg(2+) binding. 126–128 (TID) lines the substrate pocket. The Proton acceptor role is filled by Asp128. Residue Arg155 participates in ADP binding. Residues Arg163 and 170–172 (MGR) contribute to the substrate site. ADP contacts are provided by residues 186–188 (GAE) and 214–216 (KNH). Substrate is bound by residues Glu223, Arg244, and 250-253 (HIQR).

Belongs to the phosphofructokinase type A (PFKA) family. ATP-dependent PFK group I subfamily. Prokaryotic clade 'B1' sub-subfamily. As to quaternary structure, homotetramer. The cofactor is Mg(2+).

It is found in the cytoplasm. It catalyses the reaction beta-D-fructose 6-phosphate + ATP = beta-D-fructose 1,6-bisphosphate + ADP + H(+). It functions in the pathway carbohydrate degradation; glycolysis; D-glyceraldehyde 3-phosphate and glycerone phosphate from D-glucose: step 3/4. With respect to regulation, allosterically activated by ADP and other diphosphonucleosides, and allosterically inhibited by phosphoenolpyruvate. Catalyzes the phosphorylation of D-fructose 6-phosphate to fructose 1,6-bisphosphate by ATP, the first committing step of glycolysis. The chain is ATP-dependent 6-phosphofructokinase from Teredinibacter turnerae (strain ATCC 39867 / T7901).